Here is a 783-residue protein sequence, read N- to C-terminus: Protein phosphatase 2C 29 (783 aa).

Positions 151 to 194 are disordered; the sequence is SFSALPLQPGPDRSGLFMSGPIERGATSGPLDPPAGEISRSNSA. Serine 199 carries the phosphoserine modification. Positions 260–770 constitute a PPM-type phosphatase domain; sequence SSGENDLQWA…DDCTVLVIAL (511 aa). 2 residues coordinate Mn(2+): aspartate 295 and glycine 296. Positions 555 to 595 are disordered; the sequence is ETGESVETAERVEERRNDLDRDDGNKEPLVVDSSDSTVNNE. Positions 562-580 are enriched in basic and acidic residues; that stretch reads TAERVEERRNDLDRDDGNK. Positions 701 and 761 each coordinate Mn(2+).

This sequence belongs to the PP2C family. The cofactor is Mg(2+). It depends on Mn(2+) as a cofactor. As to expression, expressed in roots, leaves, stems, inflorescences, flowers and developing vascular tissue.

Its subcellular location is the nucleus. It catalyses the reaction O-phospho-L-seryl-[protein] + H2O = L-seryl-[protein] + phosphate. The catalysed reaction is O-phospho-L-threonyl-[protein] + H2O = L-threonyl-[protein] + phosphate. Its function is as follows. Involved in the regulation of pedicel length and of CLAVATA pathways controlling stem cell identity at shoot and flower meristems. This is Protein phosphatase 2C 29 (PLL1) from Arabidopsis thaliana (Mouse-ear cress).